A 195-amino-acid polypeptide reads, in one-letter code: dCTP deaminase (195 aa).

DCTP contacts are provided by residues 109–114 (RSSLAR), D127, 135–137 (TLE), Y170, K177, and Q181. E137 acts as the Proton donor/acceptor in catalysis.

It belongs to the dCTP deaminase family. In terms of assembly, homotrimer.

It catalyses the reaction dCTP + H2O + H(+) = dUTP + NH4(+). It participates in pyrimidine metabolism; dUMP biosynthesis; dUMP from dCTP (dUTP route): step 1/2. Catalyzes the deamination of dCTP to dUTP. This chain is dCTP deaminase, found in Rhodospirillum rubrum (strain ATCC 11170 / ATH 1.1.1 / DSM 467 / LMG 4362 / NCIMB 8255 / S1).